The primary structure comprises 330 residues: Protein pelota homolog (330 aa).

Belongs to the eukaryotic release factor 1 family. Pelota subfamily. Monomer. It depends on a divalent metal cation as a cofactor.

The protein resides in the cytoplasm. Its function is as follows. May function in recognizing stalled ribosomes, interact with stem-loop structures in stalled mRNA molecules, and effect endonucleolytic cleavage of the mRNA. May play a role in the release non-functional ribosomes and degradation of damaged mRNAs. Has endoribonuclease activity. This Pyrobaculum islandicum (strain DSM 4184 / JCM 9189 / GEO3) protein is Protein pelota homolog.